A 166-amino-acid chain; its full sequence is SRAVADSWMDEVIKLCGRELVRAQIAICGMSTWSKRSLSQEDAPQTPRPVAEIVPSFINKDTETIIIMLEFIANLPPELKAALSERQPSLPEPQQYVPALKDSNLSFEEFKKLIRNRQSEAADSNPSELKYLGLDTHSQKKRQPYVALFEKCCLIGCTKRSLANYC.

Positions 1–5 (SRAVA) are cleaved as a signal peptide. Cystine bridges form between C16/C153, C28/C166, and C152/C157. A propeptide spans 37-139 (SLSQEDAPQT…KYLGLDTHSQ (103 aa)) (connecting peptide).

Belongs to the insulin family. In terms of assembly, heterodimer of a B chain and an A chain linked by two disulfide bonds. In terms of tissue distribution, expressed in the corpus luteum of pregnancy but not in the placenta.

The protein localises to the secreted. In terms of biological role, relaxin is an ovarian hormone that acts with estrogen to produce dilatation of the birth canal in many mammals. May be involved in remodeling of connective tissues during pregnancy, promoting growth of pubic ligaments and ripening of the cervix. This is Prorelaxin H1 (RNL1) from Pan troglodytes (Chimpanzee).